The primary structure comprises 459 residues: MNPTHSQQPHLTIIGAGLAGCEAAWQAAALGVQVTLHEMKPTSFSPAHQSADLAELVCSNSLRGAGMNNAVGCLKEELRRCATLFMQAADATAVPAGGALAVDRDAFSRYITEHIEQHPLITLQRNEQCSVPPEGTVIIASGPLTSDALAPHLAQLTGSRHLYFYDAIAPIIEADSIDFSIAWKASRYGRGGDDYINCPMSRDEYMTFVEALKTADKVAGKDFEKVIHFEGCMPIEEMARRGDMTLAFGPMKPVGLPDPRTGKDPFAVVQLRQDNLHATLFNMVGFQTKLTYPEQRRIFRTIPGLQDARFARLGSMHRNTFINAPRCLDQHLRLTSDPRMFFAGQITGVEGYVESAACGFLAGLFAAGQLTDHAVPLPPATTGLGALLGHLSHSSPDDFQPMNVNYGLFPPLEGRKRKRSERRLAMAERALRDLEPWRQRVLSHIPDLKPFPAEDSDDV.

Residue 15-20 (GAGLAG) coordinates FAD.

The protein belongs to the MnmG family. TrmFO subfamily. The cofactor is FAD.

The protein resides in the cytoplasm. The enzyme catalyses uridine(54) in tRNA + (6R)-5,10-methylene-5,6,7,8-tetrahydrofolate + NADH + H(+) = 5-methyluridine(54) in tRNA + (6S)-5,6,7,8-tetrahydrofolate + NAD(+). It catalyses the reaction uridine(54) in tRNA + (6R)-5,10-methylene-5,6,7,8-tetrahydrofolate + NADPH + H(+) = 5-methyluridine(54) in tRNA + (6S)-5,6,7,8-tetrahydrofolate + NADP(+). Catalyzes the folate-dependent formation of 5-methyl-uridine at position 54 (M-5-U54) in all tRNAs. In Syntrophotalea carbinolica (strain DSM 2380 / NBRC 103641 / GraBd1) (Pelobacter carbinolicus), this protein is Methylenetetrahydrofolate--tRNA-(uracil-5-)-methyltransferase TrmFO.